Consider the following 296-residue polypeptide: ATP synthase gamma chain (296 aa).

The protein belongs to the ATPase gamma chain family. In terms of assembly, F-type ATPases have 2 components, CF(1) - the catalytic core - and CF(0) - the membrane proton channel. CF(1) has five subunits: alpha(3), beta(3), gamma(1), delta(1), epsilon(1). CF(0) has three main subunits: a, b and c.

It is found in the cell inner membrane. Its function is as follows. Produces ATP from ADP in the presence of a proton gradient across the membrane. The gamma chain is believed to be important in regulating ATPase activity and the flow of protons through the CF(0) complex. The sequence is that of ATP synthase gamma chain from Jannaschia sp. (strain CCS1).